The primary structure comprises 547 residues: Chaperonin GroEL (547 aa).

ATP is bound by residues 30-33, K51, 87-91, G415, 479-481, and D495; these read TLGP, DGTTT, and NAA. The segment at 525-547 is disordered; that stretch reads PKEDSPGAGAGMGGMGGMGGMDM. Over residues 532 to 547 the composition is skewed to gly residues; it reads AGAGMGGMGGMGGMDM.

Belongs to the chaperonin (HSP60) family. As to quaternary structure, forms a cylinder of 14 subunits composed of two heptameric rings stacked back-to-back. Interacts with the co-chaperonin GroES.

The protein resides in the cytoplasm. It carries out the reaction ATP + H2O + a folded polypeptide = ADP + phosphate + an unfolded polypeptide.. Together with its co-chaperonin GroES, plays an essential role in assisting protein folding. The GroEL-GroES system forms a nano-cage that allows encapsulation of the non-native substrate proteins and provides a physical environment optimized to promote and accelerate protein folding. The protein is Chaperonin GroEL of Nitrosomonas europaea (strain ATCC 19718 / CIP 103999 / KCTC 2705 / NBRC 14298).